We begin with the raw amino-acid sequence, 121 residues long: Large ribosomal subunit protein bL12 (121 aa).

This sequence belongs to the bacterial ribosomal protein bL12 family. Homodimer. Part of the ribosomal stalk of the 50S ribosomal subunit. Forms a multimeric L10(L12)X complex, where L10 forms an elongated spine to which 2 to 4 L12 dimers bind in a sequential fashion. Binds GTP-bound translation factors.

Forms part of the ribosomal stalk which helps the ribosome interact with GTP-bound translation factors. Is thus essential for accurate translation. This is Large ribosomal subunit protein bL12 from Vibrio atlanticus (strain LGP32) (Vibrio splendidus (strain Mel32)).